Reading from the N-terminus, the 453-residue chain is tRNA modification GTPase MnmE (453 aa).

Positions 22, 79, and 119 each coordinate (6S)-5-formyl-5,6,7,8-tetrahydrofolate. The TrmE-type G domain maps to 215-376; that stretch reads GMKVVIAGRP…LKLHLKSLMG (162 aa). Residue Asn225 coordinates K(+). GTP contacts are provided by residues 225–230, 244–250, 269–272, and 334–337; these read NAGKSS, TEIAGTT, DTAG, and NKAD. Residue Ser229 coordinates Mg(2+). The K(+) site is built by Thr244, Ile246, and Thr249. Thr250 contributes to the Mg(2+) binding site. Residue Lys453 participates in (6S)-5-formyl-5,6,7,8-tetrahydrofolate binding.

It belongs to the TRAFAC class TrmE-Era-EngA-EngB-Septin-like GTPase superfamily. TrmE GTPase family. In terms of assembly, homodimer. Heterotetramer of two MnmE and two MnmG subunits. Requires K(+) as cofactor.

The protein resides in the cytoplasm. In terms of biological role, exhibits a very high intrinsic GTPase hydrolysis rate. Involved in the addition of a carboxymethylaminomethyl (cmnm) group at the wobble position (U34) of certain tRNAs, forming tRNA-cmnm(5)s(2)U34. The protein is tRNA modification GTPase MnmE of Shewanella putrefaciens (strain CN-32 / ATCC BAA-453).